Here is a 193-residue protein sequence, read N- to C-terminus: Large ribosomal subunit protein bL17m (193 aa).

The protein belongs to the bacterial ribosomal protein bL17 family. In terms of assembly, component of the mitochondrial large ribosomal subunit (mt-LSU). Mature N.crassa 74S mitochondrial ribosomes consist of a small (37S) and a large (54S) subunit. The 37S small subunit contains a 16S ribosomal RNA (16S mt-rRNA) and 32 different proteins. The 54S large subunit contains a 23S rRNA (23S mt-rRNA) and 42 different proteins.

It localises to the mitochondrion. Functionally, component of the mitochondrial ribosome (mitoribosome), a dedicated translation machinery responsible for the synthesis of mitochondrial genome-encoded proteins, including at least some of the essential transmembrane subunits of the mitochondrial respiratory chain. The mitoribosomes are attached to the mitochondrial inner membrane and translation products are cotranslationally integrated into the membrane. This is Large ribosomal subunit protein bL17m (mrpl8) from Neurospora crassa (strain ATCC 24698 / 74-OR23-1A / CBS 708.71 / DSM 1257 / FGSC 987).